Here is a 365-residue protein sequence, read N- to C-terminus: Galactoside alpha-(1,2)-fucosyltransferase 1 (365 aa).

The Cytoplasmic portion of the chain corresponds to 1–8 (MWLRSHRQ). The chain crosses the membrane as a helical; Signal-anchor for type II membrane protein span at residues 9 to 25 (LCLAFLLVCVLSVIFFL). Residues 26–365 (HIHQDSFPHG…LSPLWTLAKP (340 aa)) are Lumenal-facing. Residues N65 and N327 are each glycosylated (N-linked (GlcNAc...) asparagine).

It belongs to the glycosyltransferase 11 family.

It localises to the golgi apparatus. It is found in the golgi stack membrane. The enzyme catalyses a beta-D-galactosyl-(1-&gt;4)-N-acetyl-beta-D-glucosaminyl derivative + GDP-beta-L-fucose = an alpha-L-Fuc-(1-&gt;2)-beta-D-Gal-(1-&gt;4)-beta-D-GlcNAc derivative + GDP + H(+). The catalysed reaction is a ganglioside GA1 + GDP-beta-L-fucose = a ganglioside Fuc-GA1 + GDP + H(+). It carries out the reaction a beta-D-Gal-(1-&gt;3)-beta-D-GlcNAc-(1-&gt;3)-beta-D-Gal-(1-&gt;4)-beta-D-Glc-(1&lt;-&gt;1')-Cer(d18:1(4E)) + GDP-beta-L-fucose = alpha-L-fucosyl-(1-&gt;2)- beta-D-galactosyl-(1-&gt;3)-N-acetyl-beta-D-glucosaminyl-(1-&gt;3)-beta-D-galactosyl-(1-&gt;4)-beta-D-glucosyl-(1&lt;-&gt;1')-N-acylsphing-4-enine + GDP + H(+). It catalyses the reaction a neolactoside nLc4Cer(d18:1(4E)) + GDP-beta-L-fucose = a neolactoside IV(2)-alpha-Fuc-nLc4Cer(d18:1(4E)) + GDP + H(+). The enzyme catalyses a ganglioside GM1 + GDP-beta-L-fucose = a ganglioside Fuc-GM1 + GDP + H(+). The catalysed reaction is beta-D-galactosyl-(1-&gt;3)-N-acetyl-D-galactosamine + GDP-beta-L-fucose = alpha-L-fucosyl-(1-&gt;2)-beta-D-galactosyl-(1-&gt;3)-N-acetyl-D-galactosamine + GDP + H(+). The protein operates within protein modification; protein glycosylation. Catalyzes the transfer of L-fucose, from a guanosine diphosphate-beta-L-fucose, to the terminal galactose residue of glycoconjugates through an alpha(1,2) linkage leading to H antigen synthesis that is an intermediate substrate in the synthesis of ABO blood group antigens. H antigen is essential for maturation of the glomerular layer of the main olfactory bulb, in cell migration and early cell-cell contacts during tumor associated angiogenesis. Preferentially fucosylates soluble lactose and to a lesser extent fucosylates glycolipids gangliosides GA1 and GM1a. The polypeptide is Galactoside alpha-(1,2)-fucosyltransferase 1 (Homo sapiens (Human)).